We begin with the raw amino-acid sequence, 373 residues long: Flagellar P-ring protein (373 aa).

A signal peptide spans 1–26; that stretch reads MRLLFRFLTLVAVLAMSLADVAPAWA.

This sequence belongs to the FlgI family. As to quaternary structure, the basal body constitutes a major portion of the flagellar organelle and consists of four rings (L,P,S, and M) mounted on a central rod.

The protein resides in the periplasm. It is found in the bacterial flagellum basal body. Assembles around the rod to form the L-ring and probably protects the motor/basal body from shearing forces during rotation. The protein is Flagellar P-ring protein of Rhizobium etli (strain CIAT 652).